Reading from the N-terminus, the 212-residue chain is tRNA (guanine-N(7)-)-methyltransferase (212 aa).

Residues Glu44, Asp69, Asp96, and Asp118 each contribute to the S-adenosyl-L-methionine site. Asp118 is an active-site residue. Lys122 contributes to the substrate binding site. Positions Arg124–Arg129 are interaction with RNA. Residues Asp154 and Thr191–Glu194 each bind substrate.

The protein belongs to the class I-like SAM-binding methyltransferase superfamily. TrmB family.

It carries out the reaction guanosine(46) in tRNA + S-adenosyl-L-methionine = N(7)-methylguanosine(46) in tRNA + S-adenosyl-L-homocysteine. It participates in tRNA modification; N(7)-methylguanine-tRNA biosynthesis. Its function is as follows. Catalyzes the formation of N(7)-methylguanine at position 46 (m7G46) in tRNA. This Streptococcus sanguinis (strain SK36) protein is tRNA (guanine-N(7)-)-methyltransferase.